The chain runs to 184 residues: Peptidyl-tRNA hydrolase (184 aa).

Tyrosine 14 provides a ligand contact to tRNA. Histidine 19 serves as the catalytic Proton acceptor. The tRNA site is built by phenylalanine 60 and asparagine 62.

Belongs to the PTH family. Monomer.

The protein resides in the cytoplasm. The enzyme catalyses an N-acyl-L-alpha-aminoacyl-tRNA + H2O = an N-acyl-L-amino acid + a tRNA + H(+). Hydrolyzes ribosome-free peptidyl-tRNAs (with 1 or more amino acids incorporated), which drop off the ribosome during protein synthesis, or as a result of ribosome stalling. Functionally, catalyzes the release of premature peptidyl moieties from peptidyl-tRNA molecules trapped in stalled 50S ribosomal subunits, and thus maintains levels of free tRNAs and 50S ribosomes. This is Peptidyl-tRNA hydrolase from Mesomycoplasma hyopneumoniae (strain 232) (Mycoplasma hyopneumoniae).